Here is a 264-residue protein sequence, read N- to C-terminus: MNNFASNDPLVIAGTVYSSRLLTGTGKFKDLDETRLATEAAGSQIVTVAIRRVNIGQDPHQPNLLNVLSPDRYAILPNTAGCYTAEDAVRTCRLARELLDGHRLTKLEVLGDKKTLYPDVVQTLKAAEQLVAEDFQVMVYTSDDPILAKRLEEIGCVAVMPLAAPIGSGLGVQNRYNLLEIIENAQVPIIVDAGVGTASDAAIAMELGCDAVLMNTAIAGARDPVLMASAMRKAVEAGREAFLAGRIPRKRYAAASSPVEGLVG.

Lys106 acts as the Schiff-base intermediate with DXP in catalysis. Residues Gly167, 193-194, and 215-216 each bind 1-deoxy-D-xylulose 5-phosphate; these read AG and NT.

The protein belongs to the ThiG family. Homotetramer. Forms heterodimers with either ThiH or ThiS.

The protein localises to the cytoplasm. The enzyme catalyses [ThiS sulfur-carrier protein]-C-terminal-Gly-aminoethanethioate + 2-iminoacetate + 1-deoxy-D-xylulose 5-phosphate = [ThiS sulfur-carrier protein]-C-terminal Gly-Gly + 2-[(2R,5Z)-2-carboxy-4-methylthiazol-5(2H)-ylidene]ethyl phosphate + 2 H2O + H(+). The protein operates within cofactor biosynthesis; thiamine diphosphate biosynthesis. Functionally, catalyzes the rearrangement of 1-deoxy-D-xylulose 5-phosphate (DXP) to produce the thiazole phosphate moiety of thiamine. Sulfur is provided by the thiocarboxylate moiety of the carrier protein ThiS. In vitro, sulfur can be provided by H(2)S. This is Thiazole synthase from Xylella fastidiosa (strain Temecula1 / ATCC 700964).